The chain runs to 370 residues: Histidinol-phosphate aminotransferase 1 (370 aa).

An N6-(pyridoxal phosphate)lysine modification is found at lysine 222.

It belongs to the class-II pyridoxal-phosphate-dependent aminotransferase family. Histidinol-phosphate aminotransferase subfamily. As to quaternary structure, homodimer. Pyridoxal 5'-phosphate serves as cofactor.

It carries out the reaction L-histidinol phosphate + 2-oxoglutarate = 3-(imidazol-4-yl)-2-oxopropyl phosphate + L-glutamate. Its pathway is amino-acid biosynthesis; L-histidine biosynthesis; L-histidine from 5-phospho-alpha-D-ribose 1-diphosphate: step 7/9. The polypeptide is Histidinol-phosphate aminotransferase 1 (Bacillus cereus (strain ZK / E33L)).